The chain runs to 100 residues: Small ribosomal subunit protein uS14c (100 aa).

This sequence belongs to the universal ribosomal protein uS14 family. In terms of assembly, part of the 30S ribosomal subunit.

It localises to the plastid. The protein localises to the chloroplast. In terms of biological role, binds 16S rRNA, required for the assembly of 30S particles. This chain is Small ribosomal subunit protein uS14c, found in Chloranthus spicatus (Chulantree).